We begin with the raw amino-acid sequence, 96 residues long: uncharacterized protein (96 aa).

Asn4 is a glycosylation site (N-linked (GlcNAc...) asparagine). Residues 59 to 81 traverse the membrane as a helical segment; sequence VFFTIFDTIITIIVRSGIPFPLL.

Its subcellular location is the membrane. This is an uncharacterized protein from Saccharomyces cerevisiae (strain ATCC 204508 / S288c) (Baker's yeast).